The primary structure comprises 318 residues: ATP synthase gamma chain (318 aa).

The protein belongs to the ATPase gamma chain family. As to quaternary structure, F-type ATPases have 2 components, CF(1) - the catalytic core - and CF(0) - the membrane proton channel. CF(1) has five subunits: alpha(3), beta(3), gamma(1), delta(1), epsilon(1). CF(0) has three main subunits: a, b and c.

The protein localises to the cell membrane. Produces ATP from ADP in the presence of a proton gradient across the membrane. The gamma chain is believed to be important in regulating ATPase activity and the flow of protons through the CF(0) complex. This Lactobacillus gasseri (strain ATCC 33323 / DSM 20243 / BCRC 14619 / CIP 102991 / JCM 1131 / KCTC 3163 / NCIMB 11718 / NCTC 13722 / AM63) protein is ATP synthase gamma chain.